We begin with the raw amino-acid sequence, 275 residues long: Trans-aconitate 2-methyltransferase (275 aa).

The protein belongs to the methyltransferase superfamily. Tam family.

It is found in the cytoplasm. The enzyme catalyses trans-aconitate + S-adenosyl-L-methionine = (E)-3-(methoxycarbonyl)pent-2-enedioate + S-adenosyl-L-homocysteine. Catalyzes the S-adenosylmethionine monomethyl esterification of trans-aconitate. The polypeptide is Trans-aconitate 2-methyltransferase (Pseudomonas aeruginosa (strain UCBPP-PA14)).